The following is a 367-amino-acid chain: Anhydro-N-acetylmuramic acid kinase (367 aa).

10–17 (GTSLDGVD) is an ATP binding site.

This sequence belongs to the anhydro-N-acetylmuramic acid kinase family.

It catalyses the reaction 1,6-anhydro-N-acetyl-beta-muramate + ATP + H2O = N-acetyl-D-muramate 6-phosphate + ADP + H(+). Its pathway is amino-sugar metabolism; 1,6-anhydro-N-acetylmuramate degradation. It functions in the pathway cell wall biogenesis; peptidoglycan recycling. In terms of biological role, catalyzes the specific phosphorylation of 1,6-anhydro-N-acetylmuramic acid (anhMurNAc) with the simultaneous cleavage of the 1,6-anhydro ring, generating MurNAc-6-P. Is required for the utilization of anhMurNAc either imported from the medium or derived from its own cell wall murein, and thus plays a role in cell wall recycling. The sequence is that of Anhydro-N-acetylmuramic acid kinase from Aliivibrio fischeri (strain ATCC 700601 / ES114) (Vibrio fischeri).